The primary structure comprises 530 residues: Formate--tetrahydrofolate ligase (530 aa).

Position 46 to 53 (46 to 53 (TPEGEGKT)) interacts with ATP.

This sequence belongs to the formate--tetrahydrofolate ligase family.

It carries out the reaction (6S)-5,6,7,8-tetrahydrofolate + formate + ATP = (6R)-10-formyltetrahydrofolate + ADP + phosphate. The protein operates within one-carbon metabolism; tetrahydrofolate interconversion. This is Formate--tetrahydrofolate ligase from Malacoplasma penetrans (strain HF-2) (Mycoplasma penetrans).